A 363-amino-acid polypeptide reads, in one-letter code: Outer membrane porin F (363 aa).

An N-terminal signal peptide occupies residues 1–22 (MMKRKILAAVIPALLAAATANA).

It belongs to the Gram-negative porin family. In terms of assembly, homotrimer. Forms mixed heterotrimers with OmpC and with PhoE; other mixed heterotrimers with other porins are also probable.

It localises to the cell outer membrane. Forms pores that allow passive diffusion of small molecules across the outer membrane. The polypeptide is Outer membrane porin F (Salmonella typhimurium (strain SL1344)).